We begin with the raw amino-acid sequence, 187 residues long: Ribose 1,5-bisphosphate phosphokinase PhnN (187 aa).

10–17 (GPSGSGKD) contacts ATP.

The protein belongs to the ribose 1,5-bisphosphokinase family.

It catalyses the reaction alpha-D-ribose 1,5-bisphosphate + ATP = 5-phospho-alpha-D-ribose 1-diphosphate + ADP. The protein operates within metabolic intermediate biosynthesis; 5-phospho-alpha-D-ribose 1-diphosphate biosynthesis; 5-phospho-alpha-D-ribose 1-diphosphate from D-ribose 5-phosphate (route II): step 3/3. Catalyzes the phosphorylation of ribose 1,5-bisphosphate to 5-phospho-D-ribosyl alpha-1-diphosphate (PRPP). This is Ribose 1,5-bisphosphate phosphokinase PhnN from Klebsiella pneumoniae subsp. pneumoniae (strain ATCC 700721 / MGH 78578).